The sequence spans 288 residues: ATP synthase gamma chain (288 aa).

This sequence belongs to the ATPase gamma chain family. As to quaternary structure, F-type ATPases have 2 components, CF(1) - the catalytic core - and CF(0) - the membrane proton channel. CF(1) has five subunits: alpha(3), beta(3), gamma(1), delta(1), epsilon(1). CF(0) has three main subunits: a, b and c.

Its subcellular location is the cell inner membrane. Produces ATP from ADP in the presence of a proton gradient across the membrane. The gamma chain is believed to be important in regulating ATPase activity and the flow of protons through the CF(0) complex. In Actinobacillus pleuropneumoniae serotype 3 (strain JL03), this protein is ATP synthase gamma chain.